The chain runs to 444 residues: Probable kynurenine--oxoglutarate transaminase BNA3 (444 aa).

K271 is modified (N6-(pyridoxal phosphate)lysine).

It belongs to the class-I pyridoxal-phosphate-dependent aminotransferase family. As to quaternary structure, homodimer. The cofactor is pyridoxal 5'-phosphate.

It localises to the cytoplasm. The protein localises to the mitochondrion. It catalyses the reaction L-kynurenine + 2-oxoglutarate = kynurenate + L-glutamate + H2O. The protein operates within amino-acid degradation; L-kynurenine degradation; kynurenate from L-kynurenine: step 1/2. Catalyzes the irreversible transamination of the L-tryptophan metabolite L-kynurenine to form kynurenic acid (KA). This is Probable kynurenine--oxoglutarate transaminase BNA3 (BNA3) from Saccharomyces cerevisiae (strain ATCC 204508 / S288c) (Baker's yeast).